A 503-amino-acid polypeptide reads, in one-letter code: Cytosolic carboxypeptidase 6 (503 aa).

In terms of domain architecture, Peptidase M14 spans 167–438 (YPYTYTRFQH…NVARTFLDYY (272 aa)). Zn(2+) is bound by residues His-230, Glu-233, and His-328. The active-site Proton donor/acceptor is the Glu-401. Composition is skewed to basic and acidic residues over residues 459–469 (IEVQRRKEKSP) and 487–503 (KGDK…STPF). Positions 459 to 503 (IEVQRRKEKSPPYKHPLLRGPASNYPNSKGDKKSSVNHKDPSTPF) are disordered.

It belongs to the peptidase M14 family. Interacts with MYLK. The cofactor is Zn(2+).

It is found in the cytoplasm. The protein localises to the cytosol. Its subcellular location is the cytoskeleton. It localises to the microtubule organizing center. The protein resides in the centrosome. It is found in the centriole. The protein localises to the golgi apparatus. Its subcellular location is the cilium basal body. It carries out the reaction (L-glutamyl)(n+1)-gamma-L-glutamyl-L-glutamyl-[protein] + H2O = (L-glutamyl)(n)-gamma-L-glutamyl-L-glutamyl-[protein] + L-glutamate. The enzyme catalyses C-terminal L-alpha-aminoacyl-L-glutamyl-L-glutamyl-[tubulin] + H2O = C-terminal L-alpha-aminoacyl-L-glutamyl-[tubulin] + L-glutamate. Metallocarboxypeptidase that mediates protein deglutamylation of tubulin and non-tubulin target proteins. Catalyzes the removal of polyglutamate side chains present on the gamma-carboxyl group of glutamate residues within the C-terminal tail of tubulin protein. Specifically cleaves tubulin long-side-chains, while it is not able to remove the branching point glutamate. Also catalyzes the removal of polyglutamate residues from the carboxy-terminus of non-tubulin proteins such as MYLK. Mediates the deglutamylation of nucleotidyltransferase CGAS, leading to CGAS antiviral defense response activation. Involved in KLF4 deglutamylation which promotes KLF4 proteasome-mediated degradation, thereby negatively regulating cell pluripotency maintenance and embryogenesis. The protein is Cytosolic carboxypeptidase 6 of Homo sapiens (Human).